We begin with the raw amino-acid sequence, 119 residues long: Ribonuclease P protein component (119 aa).

This sequence belongs to the RnpA family. In terms of assembly, consists of a catalytic RNA component (M1 or rnpB) and a protein subunit.

The catalysed reaction is Endonucleolytic cleavage of RNA, removing 5'-extranucleotides from tRNA precursor.. RNaseP catalyzes the removal of the 5'-leader sequence from pre-tRNA to produce the mature 5'-terminus. It can also cleave other RNA substrates such as 4.5S RNA. The protein component plays an auxiliary but essential role in vivo by binding to the 5'-leader sequence and broadening the substrate specificity of the ribozyme. This Nitrosococcus oceani (strain ATCC 19707 / BCRC 17464 / JCM 30415 / NCIMB 11848 / C-107) protein is Ribonuclease P protein component.